The sequence spans 545 residues: Membrane protein insertase YidC (545 aa).

A run of 4 helical transmembrane segments spans residues 350-370, 424-444, 461-481, and 498-518; these read IIGN…AVLY, LPML…FASV, ADPY…QTYL, and PLVF…YWVI.

It belongs to the OXA1/ALB3/YidC family. Type 1 subfamily. As to quaternary structure, interacts with the Sec translocase complex via SecD. Specifically interacts with transmembrane segments of nascent integral membrane proteins during membrane integration.

Its subcellular location is the cell inner membrane. Its function is as follows. Required for the insertion and/or proper folding and/or complex formation of integral membrane proteins into the membrane. Involved in integration of membrane proteins that insert both dependently and independently of the Sec translocase complex, as well as at least some lipoproteins. Aids folding of multispanning membrane proteins. This Neisseria meningitidis serogroup A / serotype 4A (strain DSM 15465 / Z2491) protein is Membrane protein insertase YidC.